The chain runs to 427 residues: Tumor necrosis factor receptor superfamily member 16 (427 aa).

A signal peptide spans 1–28 (MGAGATGRAMDGPRLLLLLLLGVSLGGA). Topologically, residues 29–250 (KEACPTGLYT…PVVTRGTTDN (222 aa)) are extracellular. 4 TNFR-Cys repeats span residues 31–64 (ACPT…QTVC), 66–107 (PCLD…DAVC), 108–146 (RCAY…NTVC), and 148–188 (ECPD…DAEC). Intrachain disulfides connect cysteine 32–cysteine 43, cysteine 44–cysteine 57, cysteine 47–cysteine 64, cysteine 67–cysteine 83, cysteine 86–cysteine 99, cysteine 89–cysteine 107, cysteine 109–cysteine 122, cysteine 125–cysteine 138, cysteine 128–cysteine 146, cysteine 149–cysteine 164, cysteine 167–cysteine 180, and cysteine 170–cysteine 188. A glycan (N-linked (GlcNAc...) asparagine) is linked at asparagine 60. Residues 194-219 (RWITRSTPPEGSDSTAPSTQEPEAPP) are disordered. A compositionally biased stretch (polar residues) spans 197-214 (TRSTPPEGSDSTAPSTQE). A helical membrane pass occupies residues 251-272 (LIPVYCSILAAVVVGLVAYIAF). The Cytoplasmic portion of the chain corresponds to 273 to 427 (KRWNSCKQNK…CSESTATSPV (155 aa)). Composition is skewed to polar residues over residues 281 to 291 (NKQGANSRPVN) and 305 to 326 (SGIS…TASG). Positions 281–338 (NKQGANSRPVNQTPPPEGEKLHSDSGISVDSQSLHDQQPHTQTASGQALKGDGGLYSS) are disordered. Serine 311 bears the Phosphoserine mark. Positions 326-341 (GQALKGDGGLYSSLPP) are mediates interaction with KIDINS220. Positions 344–421 (REEVEKLLNG…DLVESLCSES (78 aa)) constitute a Death domain.

As to quaternary structure, homodimer; disulfide-linked. Heterodimer with SORCS2. The extracellular domains of the heterodimer bind NGF. The cytoplasmic region of the heterodimer binds TRIO. NGF binding mediates dissociation of TRIO from the receptor complex. Interacts with RTN4R. Interacts with TRAF2, TRAF4, TRAF6, PTPN13 and RANBP9. Interacts through TRAF6 with SQSTM1 which bridges NGFR to NTRK1. Interacts with BEX1. Interacts with BEX3. Interacts with KIDINS220 and NTRK1. Can form a ternary complex with NTRK1 and KIDINS220 and this complex is affected by the expression levels of KIDINS220. An increase in KIDINS220 expression leads to a decreased association of NGFR and NTRK1. Interacts with NTRK2; may regulate the ligand specificity of the NTRK2 receptor. Interacts (via death domain) with RAB31. Interacts with LINGO1. Interacts with NRADD. Interacts with MAGED1; the interaction antagonizes the association NGFR:NTRK1. Interacts (via death domain) with ARHGDIA and RIPK2. Interacts with BFAR. N- and O-glycosylated. Post-translationally, O-linked glycans consist of Gal(1-3)GalNAc core elongated by 1 or 2 NeuNAc. In terms of processing, phosphorylated on serine residues.

It localises to the cell membrane. The protein localises to the cytoplasm. The protein resides in the perikaryon. It is found in the cell projection. Its subcellular location is the growth cone. It localises to the dendritic spine. Its function is as follows. Low affinity receptor which can bind to NGF, BDNF, NTF3, and NTF4. Forms a heterodimeric receptor with SORCS2 that binds the precursor forms of NGF, BDNF and NTF3 with high affinity, and has much lower affinity for mature NGF and BDNF. Plays an important role in differentiation and survival of specific neuronal populations during development. Can mediate cell survival as well as cell death of neural cells. Plays a role in the inactivation of RHOA. Plays a role in the regulation of the translocation of GLUT4 to the cell surface in adipocytes and skeletal muscle cells in response to insulin, probably by regulating RAB31 activity, and thereby contributes to the regulation of insulin-dependent glucose uptake. Necessary for the circadian oscillation of the clock genes BMAL1, PER1, PER2 and NR1D1 in the suprachiasmatic nucleus (SCmgetaN) of the brain and in liver and of the genes involved in glucose and lipid metabolism in the liver. Together with BFAR negatively regulates NF-kappa-B and JNK-related signaling pathways. The polypeptide is Tumor necrosis factor receptor superfamily member 16 (NGFR) (Homo sapiens (Human)).